We begin with the raw amino-acid sequence, 458 residues long: UPF0210 protein Maeo_1412 (458 aa).

Belongs to the UPF0210 family.

The sequence is that of UPF0210 protein Maeo_1412 from Methanococcus aeolicus (strain ATCC BAA-1280 / DSM 17508 / OCM 812 / Nankai-3).